The sequence spans 250 residues: 5-oxoprolinase subunit A (250 aa).

The protein belongs to the LamB/PxpA family. As to quaternary structure, forms a complex composed of PxpA, PxpB and PxpC.

The catalysed reaction is 5-oxo-L-proline + ATP + 2 H2O = L-glutamate + ADP + phosphate + H(+). Its function is as follows. Catalyzes the cleavage of 5-oxoproline to form L-glutamate coupled to the hydrolysis of ATP to ADP and inorganic phosphate. This chain is 5-oxoprolinase subunit A, found in Staphylococcus aureus (strain MW2).